The following is a 509-amino-acid chain: Phosphoenolpyruvate carboxylase (509 aa).

The protein belongs to the PEPCase type 2 family. In terms of assembly, homotetramer. It depends on Mg(2+) as a cofactor.

It catalyses the reaction oxaloacetate + phosphate = phosphoenolpyruvate + hydrogencarbonate. In terms of biological role, catalyzes the irreversible beta-carboxylation of phosphoenolpyruvate (PEP) to form oxaloacetate (OAA), a four-carbon dicarboxylic acid source for the tricarboxylic acid cycle. In Metallosphaera sedula (strain ATCC 51363 / DSM 5348 / JCM 9185 / NBRC 15509 / TH2), this protein is Phosphoenolpyruvate carboxylase.